The following is a 456-amino-acid chain: Choline kinase (456 aa).

The protein belongs to the choline/ethanolamine kinase family. As to quaternary structure, monomer. Mg(2+) serves as cofactor.

The protein resides in the cytoplasm. It is found in the nucleus. It carries out the reaction choline + ATP = phosphocholine + ADP + H(+). It participates in phospholipid metabolism; phosphatidylcholine biosynthesis; phosphocholine from choline: step 1/1. Its function is as follows. Catalyzes the committed step in the synthesis of phosphatidylcholine by the CDP-choline pathway. This Schizosaccharomyces pombe (strain 972 / ATCC 24843) (Fission yeast) protein is Choline kinase.